The chain runs to 217 residues: Probable transaldolase (217 aa).

The active-site Schiff-base intermediate with substrate is K83.

It belongs to the transaldolase family. Type 3B subfamily.

The protein localises to the cytoplasm. The catalysed reaction is D-sedoheptulose 7-phosphate + D-glyceraldehyde 3-phosphate = D-erythrose 4-phosphate + beta-D-fructose 6-phosphate. It participates in carbohydrate degradation; pentose phosphate pathway; D-glyceraldehyde 3-phosphate and beta-D-fructose 6-phosphate from D-ribose 5-phosphate and D-xylulose 5-phosphate (non-oxidative stage): step 2/3. In terms of biological role, transaldolase is important for the balance of metabolites in the pentose-phosphate pathway. The polypeptide is Probable transaldolase (Maricaulis maris (strain MCS10) (Caulobacter maris)).